The primary structure comprises 191 residues: MSLSPHQKTAGGLVLVVAVMGAASFAAVPFYNWFCRVTGFAGTTAVATEAPAEVLDRTVKVRFDASREAGMPWEFRPLQREMKLKIGETGLAFYEAYNPTDRTVAGTASYNVTPDAAGGYFAKIACFCFTEQVLAPGERVEMPVTFYVDPAIIDDPDGRYVRQITLSYTFHETALTEEQAALAAESATDVN.

Residues methionine 1–threonine 9 are Cytoplasmic-facing. The chain crosses the membrane as a helical; Signal-anchor for type II membrane protein span at residues alanine 10–phenylalanine 30. The Periplasmic portion of the chain corresponds to tyrosine 31–asparagine 191.

The protein belongs to the COX11/CtaG family.

The protein resides in the cell inner membrane. Functionally, exerts its effect at some terminal stage of cytochrome c oxidase synthesis, probably by being involved in the insertion of the copper B into subunit I. The chain is Cytochrome c oxidase assembly protein CtaG from Cereibacter sphaeroides (strain ATCC 17023 / DSM 158 / JCM 6121 / CCUG 31486 / LMG 2827 / NBRC 12203 / NCIMB 8253 / ATH 2.4.1.) (Rhodobacter sphaeroides).